The sequence spans 207 residues: GTP cyclohydrolase-2 (207 aa).

49-53 contributes to the GTP binding site; sequence RTHSE. Residues cysteine 54, cysteine 65, and cysteine 67 each coordinate Zn(2+). Residues glutamine 70, 92–94, and threonine 114 contribute to the GTP site; that span reads EGR. The Proton acceptor role is filled by aspartate 126. Residue arginine 128 is the Nucleophile of the active site. 2 residues coordinate GTP: threonine 149 and lysine 154.

This sequence belongs to the GTP cyclohydrolase II family. The cofactor is Zn(2+).

It catalyses the reaction GTP + 4 H2O = 2,5-diamino-6-hydroxy-4-(5-phosphoribosylamino)-pyrimidine + formate + 2 phosphate + 3 H(+). Its pathway is cofactor biosynthesis; riboflavin biosynthesis; 5-amino-6-(D-ribitylamino)uracil from GTP: step 1/4. Its function is as follows. Catalyzes the conversion of GTP to 2,5-diamino-6-ribosylamino-4(3H)-pyrimidinone 5'-phosphate (DARP), formate and pyrophosphate. The protein is GTP cyclohydrolase-2 of Hahella chejuensis (strain KCTC 2396).